We begin with the raw amino-acid sequence, 200 residues long: Protein GrpE (200 aa).

Basic and acidic residues predominate over residues 1–10; the sequence is MQEKDSKDVT. Positions 1-57 are disordered; that stretch reads MQEKDSKDVTMEDEETIASQEEIEVEGNSEESSKEEESNNSEISDENLSEENLKLKD. Residues 11–29 show a composition bias toward acidic residues; that stretch reads MEDEETIASQEEIEVEGNS.

The protein belongs to the GrpE family. In terms of assembly, homodimer.

The protein localises to the cytoplasm. In terms of biological role, participates actively in the response to hyperosmotic and heat shock by preventing the aggregation of stress-denatured proteins, in association with DnaK and GrpE. It is the nucleotide exchange factor for DnaK and may function as a thermosensor. Unfolded proteins bind initially to DnaJ; upon interaction with the DnaJ-bound protein, DnaK hydrolyzes its bound ATP, resulting in the formation of a stable complex. GrpE releases ADP from DnaK; ATP binding to DnaK triggers the release of the substrate protein, thus completing the reaction cycle. Several rounds of ATP-dependent interactions between DnaJ, DnaK and GrpE are required for fully efficient folding. This is Protein GrpE from Clostridium acetobutylicum (strain ATCC 824 / DSM 792 / JCM 1419 / IAM 19013 / LMG 5710 / NBRC 13948 / NRRL B-527 / VKM B-1787 / 2291 / W).